Reading from the N-terminus, the 293-residue chain is MATARPPWMWVLCALITALLLGVTEHVLANNDVSCDHPSNTVPSGSNQDLGAGAGEDARSDDSSSRIINGSDCDMHTQPWQAALLLRPNQLYCGAVLVHPQWLLTAAHCRKKVFRVRLGHYSLSPVYESGQQMFQGVKSIPHPGYSHPGHSNDLMLIKLNRRIRPTKDVRPINVSSHCPSAGTKCLVSGWGTTKSPQVHFPKVLQCLNISVLSQKRCEDAYPRQIDDTMFCAGDKAGRDSCQGDSGGPVVCNGSLQGLVSWGDYPCARPNRPGVYTNLCKFTKWIQETIQANS.

An N-terminal signal peptide occupies residues 1–22 (MATARPPWMWVLCALITALLLG). Over residues 37 to 49 (HPSNTVPSGSNQD) the composition is skewed to polar residues. A disordered region spans residues 37–68 (HPSNTVPSGSNQDLGAGAGEDARSDDSSSRII). The Peptidase S1 domain occupies 67–290 (IINGSDCDMH…FTKWIQETIQ (224 aa)). Residue Asn69 is glycosylated (N-linked (GlcNAc...) asparagine). 6 disulfides stabilise this stretch: Cys73/Cys206, Cys93/Cys109, Cys178/Cys279, Cys185/Cys251, Cys217/Cys231, and Cys241/Cys266. Residues His108 and Asp153 each act as charge relay system in the active site. Asn173 and Asn208 each carry an N-linked (GlcNAc...) asparagine glycan. Ser245 functions as the Charge relay system in the catalytic mechanism. A glycan (N-linked (GlcNAc...) asparagine) is linked at Asn252.

Belongs to the peptidase S1 family. Kallikrein subfamily. Interacts with SPINK9. In terms of tissue distribution, expressed in skin, breast, brain and testis. Expressed at the stratum granulosum of palmar skin.

It localises to the secreted. Inhibited by Zn2+. Its function is as follows. May be involved in desquamation. The polypeptide is Kallikrein-5 (Homo sapiens (Human)).